Here is a 283-residue protein sequence, read N- to C-terminus: Bis(5'-nucleosyl)-tetraphosphatase, symmetrical (283 aa).

This sequence belongs to the Ap4A hydrolase family.

The enzyme catalyses P(1),P(4)-bis(5'-adenosyl) tetraphosphate + H2O = 2 ADP + 2 H(+). Hydrolyzes diadenosine 5',5'''-P1,P4-tetraphosphate to yield ADP. This is Bis(5'-nucleosyl)-tetraphosphatase, symmetrical from Serratia proteamaculans (strain 568).